A 378-amino-acid chain; its full sequence is MTNAIDKKVNLLDLNREGIKEFFREMGEKPFRAEQVMKWLYHFCVDDFDEMTNLNKALREKLKQVAEIRAPEVREQQQSSDGTIKFAMTLFDGQDVETVWIPEGDRATLCVSSQVGCALECTFCSTGAQGFNRNLSVAEIIGQVWRVNQLLGAYGKTGIKPVTNVVMMGMGEPLLNLNNVVPAMELMLDDLGFGLSKRRVTLSTSGVVPALEKLRERIDVMLAISLHAPDDELRNEIVPINKKYNIEEFLASSRRYVEQSKAQRKVTVEYVMLDHVNDSTDQAHALAKTLKDTPSKINLIPFNPFPGSDYGRSSNSRIDRFAKVLMEYGLTVMVRKTRGDDIDAACGQLVGDVIDRTKRILKRQQKQRGGEAIAVKTT.

E97 serves as the catalytic Proton acceptor. One can recognise a Radical SAM core domain in the interval 103–341; sequence EGDRATLCVS…VMVRKTRGDD (239 aa). C110 and C346 are oxidised to a cystine. [4Fe-4S] cluster is bound by residues C117, C121, and C124. S-adenosyl-L-methionine is bound by residues 171–172, S203, 225–227, and N303; these read GE and SLH. The active-site S-methylcysteine intermediate is C346.

This sequence belongs to the radical SAM superfamily. RlmN family. [4Fe-4S] cluster is required as a cofactor.

The protein resides in the cytoplasm. The catalysed reaction is adenosine(2503) in 23S rRNA + 2 reduced [2Fe-2S]-[ferredoxin] + 2 S-adenosyl-L-methionine = 2-methyladenosine(2503) in 23S rRNA + 5'-deoxyadenosine + L-methionine + 2 oxidized [2Fe-2S]-[ferredoxin] + S-adenosyl-L-homocysteine. It carries out the reaction adenosine(37) in tRNA + 2 reduced [2Fe-2S]-[ferredoxin] + 2 S-adenosyl-L-methionine = 2-methyladenosine(37) in tRNA + 5'-deoxyadenosine + L-methionine + 2 oxidized [2Fe-2S]-[ferredoxin] + S-adenosyl-L-homocysteine. Specifically methylates position 2 of adenine 2503 in 23S rRNA and position 2 of adenine 37 in tRNAs. m2A2503 modification seems to play a crucial role in the proofreading step occurring at the peptidyl transferase center and thus would serve to optimize ribosomal fidelity. The sequence is that of Dual-specificity RNA methyltransferase RlmN from Idiomarina loihiensis (strain ATCC BAA-735 / DSM 15497 / L2-TR).